Consider the following 95-residue polypeptide: Osteocalcin (95 aa).

Positions 1-23 (MRTIFLLTLLTLAALCLSDLTDA) are cleaved as a signal peptide. Residues 24-49 (KPSGPESDKAFMSKQEGNKVVNRLRR) constitute a propeptide that is removed on maturation. The 47-residue stretch at 46–92 (RLRRYLGASVPSPDPLEPTREQCELNPACDELSDQYGLKTAYKRIYG) folds into the Gla domain. Ca(2+)-binding residues include E62, E66, E69, and D75. 4-carboxyglutamate is present on residues E62, E66, and E69. A disulfide bridge links C68 with C74.

The protein belongs to the osteocalcin/matrix Gla protein family. Post-translationally, gamma-carboxyglutamate residues are formed by vitamin K dependent carboxylation by GGCX. These residues are essential for the binding of calcium. Carboxylated in a Ptprv/Esp-dependent process. Decarboxylation promotes the hormone activity. As to expression, bone.

It is found in the secreted. In terms of biological role, the carboxylated form is one of the main organic components of the bone matrix, which constitutes 1-2% of the total bone protein: it acts as a negative regulator of bone formation and is required to limit bone formation without impairing bone resorption or mineralization. The carboxylated form binds strongly to apatite and calcium. Functionally, the uncarboxylated form acts as a hormone secreted by osteoblasts, which regulates different cellular processes, such as energy metabolism, male fertility and brain development. Regulates of energy metabolism by acting as a hormone favoring pancreatic beta-cell proliferation, insulin secretion and sensitivity and energy expenditure. Uncarboxylated osteocalcin hormone also promotes testosterone production in the testes: acts as a ligand for G protein-coupled receptor GPRC6A at the surface of Leydig cells, initiating a signaling response that promotes the expression of enzymes required for testosterone synthesis in a CREB-dependent manner. Also acts as a regulator of brain development: osteocalcin hormone crosses the blood-brain barrier and acts as a ligand for GPR158 on neurons, initiating a signaling response that prevents neuronal apoptosis in the hippocampus, favors the synthesis of all monoamine neurotransmitters and inhibits that of gamma-aminobutyric acid (GABA). Osteocalcin also crosses the placenta during pregnancy and maternal osteocalcin is required for fetal brain development. The sequence is that of Osteocalcin from Mus musculus (Mouse).